A 900-amino-acid polypeptide reads, in one-letter code: Protein translocase subunit SecA (900 aa).

ATP is bound by residues glutamine 87, 105–109 (GEGKT), and aspartate 510. The disordered stretch occupies residues 857 to 890 (DSLDSLSDGGSDSADGQEYPKVGRNEPCPCGSGK). Residues 860–872 (DSLSDGGSDSADG) show a composition bias toward low complexity. Cysteine 884, cysteine 886, cysteine 895, and histidine 896 together coordinate Zn(2+).

It belongs to the SecA family. Monomer and homodimer. Part of the essential Sec protein translocation apparatus which comprises SecA, SecYEG and auxiliary proteins SecDF-YajC and YidC. Zn(2+) serves as cofactor.

It is found in the cell inner membrane. The protein resides in the cytoplasm. The catalysed reaction is ATP + H2O + cellular proteinSide 1 = ADP + phosphate + cellular proteinSide 2.. In terms of biological role, part of the Sec protein translocase complex. Interacts with the SecYEG preprotein conducting channel. Has a central role in coupling the hydrolysis of ATP to the transfer of proteins into and across the cell membrane, serving both as a receptor for the preprotein-SecB complex and as an ATP-driven molecular motor driving the stepwise translocation of polypeptide chains across the membrane. The sequence is that of Protein translocase subunit SecA from Marinomonas sp. (strain MWYL1).